The primary structure comprises 157 residues: Small ribosomal subunit protein uS7 (157 aa).

The protein belongs to the universal ribosomal protein uS7 family. As to quaternary structure, part of the 30S ribosomal subunit. Contacts proteins S9 and S11.

Functionally, one of the primary rRNA binding proteins, it binds directly to 16S rRNA where it nucleates assembly of the head domain of the 30S subunit. Is located at the subunit interface close to the decoding center, probably blocks exit of the E-site tRNA. The polypeptide is Small ribosomal subunit protein uS7 (Rhodopirellula baltica (strain DSM 10527 / NCIMB 13988 / SH1)).